The sequence spans 77 residues: Acyl carrier protein (77 aa).

The Carrier domain occupies 2–77 (ADVLERVTKI…DAVNYIKSRL (76 aa)). Position 37 is an O-(pantetheine 4'-phosphoryl)serine (S37).

The protein belongs to the acyl carrier protein (ACP) family. 4'-phosphopantetheine is transferred from CoA to a specific serine of apo-ACP by AcpS. This modification is essential for activity because fatty acids are bound in thioester linkage to the sulfhydryl of the prosthetic group.

It localises to the cytoplasm. Its pathway is lipid metabolism; fatty acid biosynthesis. Its function is as follows. Carrier of the growing fatty acid chain in fatty acid biosynthesis. The sequence is that of Acyl carrier protein from Geobacillus kaustophilus (strain HTA426).